The sequence spans 198 residues: Na(+)-translocating NADH-quinone reductase subunit E (198 aa).

6 helical membrane-spanning segments follow: residues 11–31, 35–55, 77–97, 109–129, 140–160, and 176–196; these read AVFVENMALAFFLGMCTFLAV, VSTAFGLGIAVTVVLGISVPA, FLNFITFIGVIAAIVQVLEMI, LGIFLPLITVNCAIFGGVSFM, IVYGFGSGMGWMLAIVALAGI, and LGITFISTGLMALGFMSFAGV.

The protein belongs to the NqrDE/RnfAE family. As to quaternary structure, composed of six subunits; NqrA, NqrB, NqrC, NqrD, NqrE and NqrF.

The protein resides in the cell inner membrane. It catalyses the reaction a ubiquinone + n Na(+)(in) + NADH + H(+) = a ubiquinol + n Na(+)(out) + NAD(+). Its function is as follows. NQR complex catalyzes the reduction of ubiquinone-1 to ubiquinol by two successive reactions, coupled with the transport of Na(+) ions from the cytoplasm to the periplasm. NqrA to NqrE are probably involved in the second step, the conversion of ubisemiquinone to ubiquinol. This is Na(+)-translocating NADH-quinone reductase subunit E from Yersinia pestis bv. Antiqua (strain Nepal516).